The primary structure comprises 640 residues: Probable potassium transport system protein Kup 1 (640 aa).

The next 12 membrane-spanning stretches (helical) occupy residues 25–45 (LVLA…LYAL), 65–85 (VVSL…VMVL), 115–135 (AVGW…DGVI), 153–173 (PALA…LFMI), 181–201 (VGAA…ALGL), 227–247 (GFAG…AEAL), 263–283 (WYGL…ALLL), 305–325 (MVAL…TAVF), 353–373 (IYLP…VLGF), 381–401 (AAFG…FAVL), 410–430 (WWAV…FWLA), and 438–458 (GGWL…CWFG).

The protein belongs to the HAK/KUP transporter (TC 2.A.72) family.

It localises to the cell inner membrane. The enzyme catalyses K(+)(in) + H(+)(in) = K(+)(out) + H(+)(out). Transport of potassium into the cell. Likely operates as a K(+):H(+) symporter. The protein is Probable potassium transport system protein Kup 1 of Chromobacterium violaceum (strain ATCC 12472 / DSM 30191 / JCM 1249 / CCUG 213 / NBRC 12614 / NCIMB 9131 / NCTC 9757 / MK).